Here is a 92-residue protein sequence, read N- to C-terminus: Cell division topological specificity factor (92 aa).

The protein belongs to the MinE family.

Functionally, prevents the cell division inhibition by proteins MinC and MinD at internal division sites while permitting inhibition at polar sites. This ensures cell division at the proper site by restricting the formation of a division septum at the midpoint of the long axis of the cell. The sequence is that of Cell division topological specificity factor from Desulforamulus reducens (strain ATCC BAA-1160 / DSM 100696 / MI-1) (Desulfotomaculum reducens).